The following is a 139-amino-acid chain: Transcription antitermination protein NusB (139 aa).

The protein belongs to the NusB family.

Its function is as follows. Involved in transcription antitermination. Required for transcription of ribosomal RNA (rRNA) genes. Binds specifically to the boxA antiterminator sequence of the ribosomal RNA (rrn) operons. This is Transcription antitermination protein NusB from Escherichia fergusonii (strain ATCC 35469 / DSM 13698 / CCUG 18766 / IAM 14443 / JCM 21226 / LMG 7866 / NBRC 102419 / NCTC 12128 / CDC 0568-73).